Reading from the N-terminus, the 37-residue chain is Photosystem I reaction center subunit VIII (37 aa).

A helical membrane pass occupies residues 10 to 30; it reads IFVPLVGLVFPAIAMASLSLY.

Belongs to the PsaI family.

The protein localises to the plastid. It is found in the chloroplast thylakoid membrane. Functionally, may help in the organization of the PsaL subunit. The polypeptide is Photosystem I reaction center subunit VIII (Gossypium barbadense (Sea Island cotton)).